The primary structure comprises 632 residues: MGIRGMLRAAVILLLIRTWLAEGNYPSPIPKFHFEFSSAVPEVVLNLFNCKNCANEAVVQKILDRVLSRYDVRLRPNFGGAPVPVRISIYVTSIEQISEMNMDYTITMFFHQTWKDSRLAYYETTLNLTLDYRMHEKLWVPDCYFLNSKDAFVHDVTVENRVFQLHPDGTVRYGIRLTTTAACSLDLHKFPMDKQACNLVVESYGYTVEDIILFWDDNGNAIHMTEELHIPQFTFLGRTITSKEVYFYTGSYIRLILKFQVQREVNSYLVQVYWPTVLTTITSWISFWMNYDSSAARVTIGLTSMLILTTIDSHLRDKLPNISCIKAIDIYILVCLFFVFLSLLEYVYINYLFYSRGPRRQPRRHRRPRRVIARYRYQQVVVGNVQDGLINVEDGVSSLPITPAQAPLASPESLGSLTSTSEQAQLATSESLSPLTSLSGQAPLATGESLSDLPSTSEQARHSYGVRFNGFQADDSIIPTEIRNRVEAHGHGVTHDHEDSNESLSSDERHGHGPSGKPMLHHGEKGVQEAGWDLDDNNDKSDCLAIKEQFKCDTNSTWGLNDDELMAHGQEKDSSSESEDSCPPSPGCSFTEGFSFDLFNPDYVPKVDKWSRFLFPLAFGLFNIVYWVYHMY.

Positions 1-21 (MGIRGMLRAAVILLLIRTWLA) are cleaved as a signal peptide. Topologically, residues 22-268 (EGNYPSPIPK…FQVQREVNSY (247 aa)) are extracellular. The N-linked (GlcNAc...) asparagine glycan is linked to Asn127. A disulfide bond links Cys183 and Cys197. The chain crosses the membrane as a helical span at residues 269–289 (LVQVYWPTVLTTITSWISFWM). The Cytoplasmic portion of the chain corresponds to 290–297 (NYDSSAAR). The chain crosses the membrane as a helical span at residues 298–315 (VTIGLTSMLILTTIDSHL). The Extracellular portion of the chain corresponds to 316-326 (RDKLPNISCIK). A helical membrane pass occupies residues 327 to 347 (AIDIYILVCLFFVFLSLLEYV). Residues 348–611 (YINYLFYSRG…DYVPKVDKWS (264 aa)) lie on the Cytoplasmic side of the membrane. Disordered stretches follow at residues 410-458 (SPES…STSE) and 491-523 (HGVTHDHEDSNESLSSDERHGHGPSGKPMLHHG). The segment covering 413 to 425 (SLGSLTSTSEQAQ) has biased composition (polar residues). Over residues 426 to 439 (LATSESLSPLTSLS) the composition is skewed to low complexity. Residues 448–458 (ESLSDLPSTSE) are compositionally biased toward polar residues. Residues 491 to 511 (HGVTHDHEDSNESLSSDERHG) show a composition bias toward basic and acidic residues. Residues 612–632 (RFLFPLAFGLFNIVYWVYHMY) form a helical membrane-spanning segment.

It belongs to the ligand-gated ion channel (TC 1.A.9) family. Gamma-aminobutyric acid receptor (TC 1.A.9.5) subfamily. GABRQ sub-subfamily. Heteropentamer, formed by a combination of alpha (GABRA1-6), beta (GABRB1-3), gamma (GABRG1-3), delta (GABRD), epsilon (GABRE), rho (GABRR1-3), pi (GABRP) and theta (GABRQ) chains, each subunit exhibiting distinct physiological and pharmacological properties. Expressed in brain.

It is found in the postsynaptic cell membrane. Its subcellular location is the cell membrane. The enzyme catalyses chloride(in) = chloride(out). With respect to regulation, potentiated by etomidate, propofol, pregnanolone and pentobarbital. Functionally, theta subunit of the heteropentameric ligand-gated chloride channel gated by gamma-aminobutyric acid (GABA), a major inhibitory neurotransmitter in the brain. GABA-gated chloride channels, also named GABA(A) receptors (GABAAR), consist of five subunits arranged around a central pore and contain GABA active binding site(s) located at the alpha and beta subunit interfaces. When activated by GABA, GABAARs selectively allow the flow of chloride anions across the cell membrane down their electrochemical gradient. In Homo sapiens (Human), this protein is Gamma-aminobutyric acid receptor subunit theta.